Consider the following 556-residue polypeptide: Hydroxylamine reductase (556 aa).

Residues Cys-5, Cys-8, Cys-17, and Cys-23 each coordinate [4Fe-4S] cluster. Hybrid [4Fe-2O-2S] cluster-binding residues include His-249, Glu-273, Cys-317, Cys-409, Cys-437, Cys-462, Glu-497, and Lys-499. Cys-409 carries the post-translational modification Cysteine persulfide.

This sequence belongs to the HCP family. [4Fe-4S] cluster serves as cofactor. Hybrid [4Fe-2O-2S] cluster is required as a cofactor.

It localises to the cytoplasm. It catalyses the reaction A + NH4(+) + H2O = hydroxylamine + AH2 + H(+). Catalyzes the reduction of hydroxylamine to form NH(3) and H(2)O. The chain is Hydroxylamine reductase from Kosmotoga olearia (strain ATCC BAA-1733 / DSM 21960 / TBF 19.5.1).